The following is a 400-amino-acid chain: Na(+)/H(+) antiporter NhaA (400 aa).

11 helical membrane passes run 26-46 (AGGI…NSPL), 71-91 (LIHW…GMEV), 107-127 (IFPA…YWFI), 137-157 (GWAI…ALLS), 166-186 (IFLL…IALF), 189-209 (HGLS…LILL), 225-245 (AILW…GVII), 273-293 (FVIL…GIDV), 299-319 (PLLL…IFGF), 340-360 (IFAV…LASL), and 373-393 (LSRL…YLFL).

This sequence belongs to the NhaA Na(+)/H(+) (TC 2.A.33) antiporter family.

The protein resides in the cell inner membrane. It carries out the reaction Na(+)(in) + 2 H(+)(out) = Na(+)(out) + 2 H(+)(in). Functionally, na(+)/H(+) antiporter that extrudes sodium in exchange for external protons. This Haemophilus influenzae (strain ATCC 51907 / DSM 11121 / KW20 / Rd) protein is Na(+)/H(+) antiporter NhaA.